The sequence spans 367 residues: Adenosine deaminase (367 aa).

Zn(2+) is bound by residues His46 and His48. A purine D-ribonucleoside-binding positions include 48–50, Asp176, and Gly205; that span reads HLD. Residues 174-188 are gating helix loop; regulates binding affinity for substrates and thus substrate selectivity; that stretch reads TGDGGLSHERMKEAA. His230 is a binding site for Zn(2+). 3 residues coordinate a purine D-ribonucleoside: Glu233, His257, and Asp314. Asp314 contributes to the Zn(2+) binding site.

The protein belongs to the metallo-dependent hydrolases superfamily. Adenosine and AMP deaminases family. The cofactor is Zn(2+).

The catalysed reaction is adenosine + H2O + H(+) = inosine + NH4(+). It carries out the reaction S-methyl-5'-thioadenosine + H2O + H(+) = S-methyl-5'-thioinosine + NH4(+). It functions in the pathway purine metabolism; purine nucleoside salvage. Its activity is regulated as follows. Inhibited by coformycin and methylthiocoformycin (MT-coformycin). Catalyzes the hydrolytic deamination of adenosine to produce inosine. Unlike mammalian adenosine deaminases, also catalyzes the deamination of 5'-methylthioadenosine (MTA), a by-product of polyamine biosynthesis, to produce 5'-methylthioinosine (MTI). Plays an essential role in the purine salvage pathway which allows the parasite to use host cell purines for the synthesis of nucleic acids. The protein is Adenosine deaminase of Plasmodium falciparum (isolate 3D7).